Here is a 323-residue protein sequence, read N- to C-terminus: GILT-like protein C02D5.2 (323 aa).

The helical transmembrane segment at 13 to 32 (LICRPILTFSSLHILTAFLI) threads the bilayer. The N-linked (GlcNAc...) asparagine glycan is linked to Asn-35. A run of 2 helical transmembrane segments spans residues 37-59 (SYIN…HRFL) and 87-104 (YIYG…YRSL). A glycan (N-linked (GlcNAc...) asparagine) is linked at Asn-289.

It belongs to the GILT family.

It is found in the membrane. The protein is GILT-like protein C02D5.2 of Caenorhabditis elegans.